Reading from the N-terminus, the 174-residue chain is Disulfide bond formation protein B (174 aa).

At 1-14 (MLHIFYIYSKSRKF) the chain is on the cytoplasmic side. Residues 15 to 31 (WAILICSSISLISIALL) form a helical membrane-spanning segment. Over 32–49 (NQFFFLLKPCILCIYQRC) the chain is Periplasmic. Cys41 and Cys44 are oxidised to a cystine. Residues 50 to 65 (SLFGITIAGLIALISP) traverse the membrane as a helical segment. The Cytoplasmic segment spans residues 66–72 (KTTLLRL). A helical transmembrane segment spans residues 73–90 (FSIFIWLYSAIKGLYFSN). Residues 91 to 146 (IHMQTTLHPSSSLTCDLFVSFPNWLPLNKWYPIIFDSKISNCYSYPQYLLYLEISQ) are Periplasmic-facing. Cys105 and Cys132 are joined by a disulfide. Residues 147–165 (WMLLFFLIYLIIAIFTIIS) form a helical membrane-spanning segment. The Cytoplasmic segment spans residues 166–174 (QCHNLFQKK).

The protein belongs to the DsbB family.

Its subcellular location is the cell inner membrane. Its function is as follows. Required for disulfide bond formation in some periplasmic proteins. Acts by oxidizing the DsbA protein. The protein is Disulfide bond formation protein B of Blochmanniella floridana.